The following is a 119-amino-acid chain: Protein phosphatase EYA1 (119 aa).

It belongs to the HAD-like hydrolase superfamily. EYA family. Requires Mg(2+) as cofactor.

The protein localises to the cytoplasm. It localises to the nucleus. The catalysed reaction is O-phospho-L-tyrosyl-[protein] + H2O = L-tyrosyl-[protein] + phosphate. It carries out the reaction O-phospho-L-seryl-[protein] + H2O = L-seryl-[protein] + phosphate. It catalyses the reaction O-phospho-L-threonyl-[protein] + H2O = L-threonyl-[protein] + phosphate. Functions both as protein phosphatase and as transcriptional coactivator for SIX1, and probably also for other transcription factors of this family. Tyrosine phosphatase that dephosphorylates 'Tyr-142' of histone H2AX (H2AXY142ph) and promotes efficient DNA repair via the recruitment of DNA repair complexes containing MDC1. 'Tyr-142' phosphorylation of histone H2AX plays a central role in DNA repair and acts as a mark that distinguishes between apoptotic and repair responses to genotoxic stress. Its function as histone phosphatase may contribute to its function in transcription regulation during organogenesis. Also has phosphatase activity with proteins phosphorylated on Ser and Thr residues (in vitro). Required for normal embryonic development of the skeleton, kidneys and ears. In Gallus gallus (Chicken), this protein is Protein phosphatase EYA1 (EYA1).